Reading from the N-terminus, the 434-residue chain is Gamma-enolase (434 aa).

Positions 158 and 167 each coordinate substrate. Glu210 acts as the Proton donor in catalysis. The Mg(2+) site is built by Asp245, Glu293, and Asp318. Residues Glu293 and Asp318 each contribute to the substrate site. Catalysis depends on Lys343, which acts as the Proton acceptor. Residues 370–373 (SHRS) and Lys394 contribute to the substrate site.

Belongs to the enolase family. As to quaternary structure, homodimer. Requires Mg(2+) as cofactor. Expressed in the brain and, to much less but significant extents, in the pituitary and adrenal glands.

It localises to the cytoplasm. It carries out the reaction (2R)-2-phosphoglycerate = phosphoenolpyruvate + H2O. It participates in carbohydrate degradation; glycolysis; pyruvate from D-glyceraldehyde 3-phosphate: step 4/5. The polypeptide is Gamma-enolase (ENO2) (Gallus gallus (Chicken)).